A 907-amino-acid polypeptide reads, in one-letter code: Clumping factor B (907 aa).

Positions Met1–Ala44 are cleaved as a signal peptide. A YSIRK-G/S signaling motif motif is present at residues Tyr15 to Ser26. 2 stretches are compositionally biased toward polar residues: residues Ala44–Ala61 and Met68–Ser101. A disordered region spans residues Ala44–Arg191. The segment at Ser45 to Asn542 is ligand binding A region. The segment covering Thr102–Pro119 has biased composition (low complexity). Polar residues predominate over residues Gln134–Ser189. Residues Asp272–Ser276 carry the MIDAS-like motif motif. Residues Tyr530 to Asn879 are disordered. Pro residues predominate over residues Asp545–Glu555. Over residues Pro556–Asp831 the composition is skewed to acidic residues. A compositionally biased stretch (polar residues) spans Arg835 to Pro846. The span at His863 to Glu876 shows a compositional bias: basic and acidic residues. The LPXTG sorting signal motif lies at Leu868–Gly872. Thr871 is modified (pentaglycyl murein peptidoglycan amidated threonine). Positions Gly872–Ala907 are cleaved as a propeptide — removed by sortase.

This sequence belongs to the serine-aspartate repeat-containing protein (SDr) family. Post-translationally, proteolytically cleaved by aureolysin (aur). This cleavage leads to the inactivation of ClfB.

Its subcellular location is the secreted. It localises to the cell wall. Functionally, cell surface-associated protein implicated in virulence by promoting bacterial attachment to both alpha- and beta-chains of human fibrinogen and inducing the formation of bacterial clumps. The chain is Clumping factor B (clfB) from Staphylococcus aureus (strain MW2).